We begin with the raw amino-acid sequence, 560 residues long: DNA ligase B (560 aa).

The active-site N6-AMP-lysine intermediate is Lys-124.

This sequence belongs to the NAD-dependent DNA ligase family. LigB subfamily.

The enzyme catalyses NAD(+) + (deoxyribonucleotide)n-3'-hydroxyl + 5'-phospho-(deoxyribonucleotide)m = (deoxyribonucleotide)n+m + AMP + beta-nicotinamide D-nucleotide.. Catalyzes the formation of phosphodiester linkages between 5'-phosphoryl and 3'-hydroxyl groups in double-stranded DNA using NAD as a coenzyme and as the energy source for the reaction. The sequence is that of DNA ligase B from Escherichia coli (strain K12 / DH10B).